Reading from the N-terminus, the 358-residue chain is uncharacterized protein (358 aa).

It belongs to the SMP-30/CGR1 family.

This is an uncharacterized protein from Saccharomyces cerevisiae (strain ATCC 204508 / S288c) (Baker's yeast).